The sequence spans 508 residues: Ras association domain-containing protein 10 (508 aa).

The Ras-associating domain maps to 1-133; it reads MDPSEKKISV…VRFVLVRSEA (133 aa). 2 disordered regions span residues 51 to 81 and 186 to 221; these read RRGL…AMPP and KLNR…ESAS. Positions 66 to 78 are enriched in acidic residues; sequence EPPDENDEDDDDA. The span at 195–214 shows a compositional bias: low complexity; it reads PSSPCSSTSSSTASSCSSSA. 2 coiled-coil regions span residues 235–266 and 319–358; these read QDHT…DRMR and LEEL…NQRW. The tract at residues 473-508 is disordered; the sequence is GLAKSCPGNDEDSDTGLSSMHSQDSDSVPPVCESLV. A compositionally biased stretch (polar residues) spans 487–498; the sequence is TGLSSMHSQDSD.

In terms of tissue distribution, expressed in neural progenitor cells (at protein level).

It is found in the cytoplasm. It localises to the cytosol. The protein resides in the cytoskeleton. The protein localises to the microtubule organizing center. Its subcellular location is the centrosome. It is found in the spindle pole. Its function is as follows. Plays an important role in regulating embryonic neurogenesis. The protein is Ras association domain-containing protein 10 (Rassf10) of Mus musculus (Mouse).